Consider the following 1225-residue polypeptide: MGRLVGLELSNFKSYRGVTKVGFGESNFTSIIGPNGSGKSNMMDAISFVLGVRSNHLRSNILKDLIYRGVLNDENSDDYDNEGAASSNPQSAYVKAFYQKGNKLVELMRIISRNGDTSYKIDGKTVSYKDYSIFLENENILIKAKNFLVFQGDVEQIAAQSPVELSRMFEEVSGSIQYKKEYEELKEKIEKLSKSATESIKNRRRIHGELKTYKEGINKNEEYRKQLDKKNELQKFQALWQLYHLEQQKEELTDKLSALNSEISSLKGKINNEMKSLQRSKSSFVKESAVISKQKSKLDYIFKDKEKLVSDLRLIKVPQQAAGKRISHIEKRIESLQKDLQRQKTYVERFETQLKVVTRSKEAFEEEIKQSARNYDKFKLNENDLKTYNCLHEKYLTEGGSILEEKIAVLNNDKREIQEELERFNKRADISKRRITEELSITGEKLDTQLNDLRVSLNEKNALHTERLHELKKLQSDIESANNQEYDLNFKLRETLVKIDDLSANQRETMKERKLRENIAMLKRFFPGVKGLVHDLCHPKKEKYGLAVSTILGKNFDSVIVENLTVAQECIAFLKKQRAGTASFIPLDTIETELPTLSLPDSQDYILSINAIDYEPEYEKAMQYVCGDSIICNTLNIAKDLKWKKGIRGKLVTIEGALIHKAGLMTGGISGDANNRWDKEEYQSLMSLKDKLLIQIDELSNGQRSNSIRAREVENSVSLLNSDIANLRTQVTQQKRSLDENRLEIKYHNDLIEKEIQPKITELKKKLDDLENTKDNLVKEKEALQNNIFKEFTSKIGFTIKEYENHSGELMRQQSKELQQLQKQILTVENKLQFETDRLSTTQRRYEKAQKDLENAQVEMKSLEEQEYAIEMKIGSIESKLEEHKNHLDELQKKFVTKQSELNSSEDILEDMNSNLQVLKRERDGIKEDIEKFDLERVTALKNCKISNINIPISSETTIDDLPISSTDNEAITISNSIDINYKGLPKKYKENNTDSARKELEQKIHEVEEILNELQPNARALERYDEAEGRFEVINNETEQLKAEEKKILNQFLKIKKKRKELFEKTFDYVSDHLDAIYRELTKNPNSNVELAGGNASLTIEDEDEPFNAGIKYHATPPLKRFKDMEYLSGGEKTVAALALLFAINSYQPSPFFVLDEVDAALDITNVQRIAAYIRRHRNPDLQFIVISLKNTMFEKSDALVGVYRQQQENSSKIITLDLSNYAE.

Residue 33 to 40 (GPNGSGKS) participates in ATP binding. A coiled-coil region spans residues 173 to 489 (SGSIQYKKEY…SANNQEYDLN (317 aa)). Residues 527–641 (PGVKGLVHDL…CNTLNIAKDL (115 aa)) form the SMC hinge domain. Residues 679–1063 (KEEYQSLMSL…LKIKKKRKEL (385 aa)) are a coiled coil. Positions 1057-1061 (KKKRK) match the Nuclear localization signal motif.

Belongs to the SMC family. SMC1 subfamily. As to quaternary structure, cohesin complexes are composed of the SMC1 and SMC3 heterodimer attached via their SMC hinge domain, MCD1/SCC1 which link them, and IRR1/SCC3, which interacts with MCD1. The cohesin complex also interacts with SCC2, which is required for its association with chromosomes.

It localises to the nucleus. The protein resides in the chromosome. Its function is as follows. Involved in chromosome cohesion during cell cycle and in DNA repair. Central component of cohesin complex. The cohesin complex is required for the cohesion of sister chromatids after DNA replication. The cohesin complex apparently forms a large proteinaceous ring within which sister chromatids can be trapped. At anaphase, the complex is cleaved and dissociates from chromatin, allowing sister chromatids to segregate. This Saccharomyces cerevisiae (strain ATCC 204508 / S288c) (Baker's yeast) protein is Structural maintenance of chromosomes protein 1 (SMC1).